The sequence spans 309 residues: Pyridoxal 5'-phosphate synthase subunit PDX1.1 (309 aa).

An N-acetylmethionine modification is found at methionine 1. Aspartate 41 lines the D-ribose 5-phosphate pocket. The active-site Schiff-base intermediate with D-ribose 5-phosphate is lysine 98. Glycine 170 provides a ligand contact to D-ribose 5-phosphate. Arginine 182 is a binding site for D-glyceraldehyde 3-phosphate. Residues glycine 231 and 252-253 (GS) contribute to the D-ribose 5-phosphate site.

It belongs to the PdxS/SNZ family. Homodimer or heterodimer with PDX1.2 or PDX1.3. Interacts with PDX2. Expressed in flowers, shoots, leaves and weakly in roots.

It localises to the cytoplasm. The enzyme catalyses aldehydo-D-ribose 5-phosphate + D-glyceraldehyde 3-phosphate + L-glutamine = pyridoxal 5'-phosphate + L-glutamate + phosphate + 3 H2O + H(+). Its pathway is cofactor biosynthesis; pyridoxal 5'-phosphate biosynthesis. In terms of biological role, catalyzes the formation of pyridoxal 5'-phosphate from ribose 5-phosphate (RBP), glyceraldehyde 3-phosphate (G3P) and ammonia. The ammonia is provided by PDX2. Can also use ribulose 5-phosphate and dihydroxyacetone phosphate as substrates, resulting from enzyme-catalyzed isomerization of RBP and G3P, respectively. Also plays an indirect role in resistance to singlet oxygen-generating photosensitizers. The polypeptide is Pyridoxal 5'-phosphate synthase subunit PDX1.1 (PDX11) (Arabidopsis thaliana (Mouse-ear cress)).